We begin with the raw amino-acid sequence, 111 residues long: Probable 4-amino-4-deoxy-L-arabinose-phosphoundecaprenol flippase subunit ArnE (111 aa).

3 consecutive transmembrane segments (helical) span residues 38–58, 61–81, and 91–111; these read LWLG…LLVL, LPVG…TLAA, and PRHW…GSAA. Positions 40–109 constitute an EamA domain; it reads LGLALICMGA…IISGIIILGS (70 aa).

Belongs to the ArnE family. In terms of assembly, heterodimer of ArnE and ArnF.

The protein resides in the cell inner membrane. It participates in bacterial outer membrane biogenesis; lipopolysaccharide biosynthesis. Functionally, translocates 4-amino-4-deoxy-L-arabinose-phosphoundecaprenol (alpha-L-Ara4N-phosphoundecaprenol) from the cytoplasmic to the periplasmic side of the inner membrane. The protein is Probable 4-amino-4-deoxy-L-arabinose-phosphoundecaprenol flippase subunit ArnE of Salmonella enteritidis PT4 (strain P125109).